The sequence spans 294 residues: tRNA dimethylallyltransferase (294 aa).

10–17 (GPTAVGKT) serves as a coordination point for ATP. Residue 12–17 (TAVGKT) coordinates substrate. The interval 35-38 (DSQQ) is interaction with substrate tRNA.

This sequence belongs to the IPP transferase family. Monomer. It depends on Mg(2+) as a cofactor.

It catalyses the reaction adenosine(37) in tRNA + dimethylallyl diphosphate = N(6)-dimethylallyladenosine(37) in tRNA + diphosphate. Its function is as follows. Catalyzes the transfer of a dimethylallyl group onto the adenine at position 37 in tRNAs that read codons beginning with uridine, leading to the formation of N6-(dimethylallyl)adenosine (i(6)A). This is tRNA dimethylallyltransferase from Streptococcus pneumoniae serotype 19F (strain G54).